The primary structure comprises 219 residues: Histone H1.01 (219 aa).

Composition is skewed to low complexity over residues M1–A19 and A27–P39. Disordered regions lie at residues M1 to S40 and L94 to K219. N-acetylserine is present on S2. One can recognise an H15 domain in the interval A37–K110. Basic residues-rich tracts occupy residues A119–A134, K142–K159, K167–A185, and K192–K219.

This sequence belongs to the histone H1/H5 family.

It is found in the nucleus. The protein localises to the chromosome. Its function is as follows. Histones H1 are necessary for the condensation of nucleosome chains into higher-order structures. The sequence is that of Histone H1.01 from Gallus gallus (Chicken).